The chain runs to 62 residues: Keratin-associated protein 19-5 (62 aa).

Residues 5 to 56 (GSYYGGLGSGIRGFGNLGYGYGCGCGFGGYGYGSGYGRYGYGYPRPLYYGGY) are 14 X 2 AA repeats of G-[YCGS].

Belongs to the KRTAP type 19 family. Interacts with hair keratins. In terms of tissue distribution, expressed in skin during two hair growth cycles. Expression restricted to the cortical cells of hair follicles, appearing first in the cortical cells processing the flat nuclei located a few cells above the dermal papilla.

In terms of biological role, in the hair cortex, hair keratin intermediate filaments are embedded in an interfilamentous matrix, consisting of hair keratin-associated proteins (KRTAP), which are essential for the formation of a rigid and resistant hair shaft through their extensive disulfide bond cross-linking with abundant cysteine residues of hair keratins. The matrix proteins include the high-sulfur and high-glycine-tyrosine keratins. This Mus musculus (Mouse) protein is Keratin-associated protein 19-5 (Krtap19-5).